Here is a 313-residue protein sequence, read N- to C-terminus: Aspartate carbamoyltransferase catalytic subunit (313 aa).

Arginine 54 and threonine 55 together coordinate carbamoyl phosphate. Lysine 82 is an L-aspartate binding site. Residues arginine 104, histidine 132, and glutamine 135 each coordinate carbamoyl phosphate. 2 residues coordinate L-aspartate: arginine 165 and arginine 219. The carbamoyl phosphate site is built by glycine 260 and proline 261.

Belongs to the aspartate/ornithine carbamoyltransferase superfamily. ATCase family. As to quaternary structure, heterododecamer (2C3:3R2) of six catalytic PyrB chains organized as two trimers (C3), and six regulatory PyrI chains organized as three dimers (R2).

The catalysed reaction is carbamoyl phosphate + L-aspartate = N-carbamoyl-L-aspartate + phosphate + H(+). The protein operates within pyrimidine metabolism; UMP biosynthesis via de novo pathway; (S)-dihydroorotate from bicarbonate: step 2/3. Catalyzes the condensation of carbamoyl phosphate and aspartate to form carbamoyl aspartate and inorganic phosphate, the committed step in the de novo pyrimidine nucleotide biosynthesis pathway. The chain is Aspartate carbamoyltransferase catalytic subunit from Thermobifida fusca (strain YX).